A 1120-amino-acid chain; its full sequence is Isoleucine--tRNA ligase (1120 aa).

Residues 64–74 carry the 'HIGH' region motif; that stretch reads PFANGLPHYGH. Residues 647-651 carry the 'KMSKS' region motif; sequence KLSKR. An ATP-binding site is contributed by Lys650.

It belongs to the class-I aminoacyl-tRNA synthetase family. IleS type 2 subfamily. As to quaternary structure, monomer. It depends on Zn(2+) as a cofactor.

It is found in the cytoplasm. The enzyme catalyses tRNA(Ile) + L-isoleucine + ATP = L-isoleucyl-tRNA(Ile) + AMP + diphosphate. Its function is as follows. Catalyzes the attachment of isoleucine to tRNA(Ile). As IleRS can inadvertently accommodate and process structurally similar amino acids such as valine, to avoid such errors it has two additional distinct tRNA(Ile)-dependent editing activities. One activity is designated as 'pretransfer' editing and involves the hydrolysis of activated Val-AMP. The other activity is designated 'posttransfer' editing and involves deacylation of mischarged Val-tRNA(Ile). The sequence is that of Isoleucine--tRNA ligase from Ehrlichia canis (strain Jake).